The sequence spans 309 residues: Low-density lipoprotein receptor-related protein 1 (309 aa).

It belongs to the LDLR family.

The protein localises to the endoplasmic reticulum. It localises to the golgi apparatus. Its subcellular location is the endosome. In terms of biological role, involved in endocytosis, fatty acid beta-oxidation and infectious growth. Plays a critical role in the accumulation of MSN2 from the cytosol to the nucleus by activating the cyclic AMP signaling pathway. MSN2 can then target the dienoyl-coenzyme A isomerase DCI1 and other genes involved in fatty acid beta-oxidation, which is important for lipid droplets degradation and infectious growth. This Pyricularia oryzae (strain 70-15 / ATCC MYA-4617 / FGSC 8958) (Rice blast fungus) protein is Low-density lipoprotein receptor-related protein 1.